We begin with the raw amino-acid sequence, 243 residues long: 2,3-bisphosphoglycerate-dependent phosphoglycerate mutase (243 aa).

Substrate contacts are provided by residues 8 to 15 (RHGQSEWN), 21 to 22 (TG), Arg-60, 87 to 90 (ERHY), Lys-98, 114 to 115 (RR), and 183 to 184 (GN). Catalysis depends on His-9, which acts as the Tele-phosphohistidine intermediate. Glu-87 functions as the Proton donor/acceptor in the catalytic mechanism.

It belongs to the phosphoglycerate mutase family. BPG-dependent PGAM subfamily.

It catalyses the reaction (2R)-2-phosphoglycerate = (2R)-3-phosphoglycerate. It participates in carbohydrate degradation; glycolysis; pyruvate from D-glyceraldehyde 3-phosphate: step 3/5. Its function is as follows. Catalyzes the interconversion of 2-phosphoglycerate and 3-phosphoglycerate. The polypeptide is 2,3-bisphosphoglycerate-dependent phosphoglycerate mutase (Clostridium acetobutylicum (strain ATCC 824 / DSM 792 / JCM 1419 / IAM 19013 / LMG 5710 / NBRC 13948 / NRRL B-527 / VKM B-1787 / 2291 / W)).